The primary structure comprises 736 residues: Orphan sodium- and chloride-dependent neurotransmitter transporter NTT5 (736 aa).

Over 1–138 (MKTEAQPSTS…FAYLWLNSGG (138 aa)) the chain is Cytoplasmic. Transmembrane regions (helical) follow at residues 139–159 (CSFA…LLFL), 177–197 (IIAP…FILG), and 199–219 (YFNV…QFPV). Over 220-263 (PWEKCPLTMNSSGFDPECERTTPSIYFWYQQALKASDRIEDGGS) the chain is Extracellular. N-linked (GlcNAc...) asparagine glycosylation is present at N229. A run of 4 helical transmembrane segments spans residues 264 to 284 (PVYS…AFMI), 290 to 310 (TGKV…GFFI), 338 to 358 (VWSL…GSVA), and 383 to 403 (LTLL…ATVI). Over 404-495 (THRCCERNAE…EAMSFLPPSV (92 aa)) the chain is Extracellular. The next 5 membrane-spanning stretches (helical) occupy residues 496–516 (FWSF…AIGI), 534–554 (HTKL…LFFT), 568–588 (YWIV…VSWA), 609–629 (IFGW…FVTM), and 659–679 (ALLL…AYFV). Topologically, residues 680 to 736 (YCRIHRIPFRPKSGDGPMTASTSLPLSHQLTPSKEVQKEEILQVDETKYPSTCNVTS) are cytoplasmic.

The protein belongs to the sodium:neurotransmitter symporter (SNF) (TC 2.A.22) family. SLC6A16 subfamily. In terms of tissue distribution, highly expressed in peripheral tissues, particularly in testis, pancreas, and prostate.

The protein resides in the membrane. This is Orphan sodium- and chloride-dependent neurotransmitter transporter NTT5 (SLC6A16) from Homo sapiens (Human).